A 373-amino-acid polypeptide reads, in one-letter code: Flagellar P-ring protein (373 aa).

A signal peptide spans 1 to 26 (MKLFFRFVTLVAVLAMSLANVAPAWA).

The protein belongs to the FlgI family. As to quaternary structure, the basal body constitutes a major portion of the flagellar organelle and consists of four rings (L,P,S, and M) mounted on a central rod.

The protein localises to the periplasm. Its subcellular location is the bacterial flagellum basal body. Assembles around the rod to form the L-ring and probably protects the motor/basal body from shearing forces during rotation. This chain is Flagellar P-ring protein, found in Rhizobium johnstonii (strain DSM 114642 / LMG 32736 / 3841) (Rhizobium leguminosarum bv. viciae).